Consider the following 422-residue polypeptide: Phosphoribosylamine--glycine ligase (422 aa).

The region spanning 107–313 is the ATP-grasp domain; it reads KDLMKKYDIP…LVQVLLDLLD (207 aa). 133–194 lines the ATP pocket; it reads VQEKGAPIVI…EEYLSGEEFS (62 aa). 2 residues coordinate Mg(2+): glutamate 283 and asparagine 285.

It belongs to the GARS family. Requires Mg(2+) as cofactor. Mn(2+) is required as a cofactor.

The catalysed reaction is 5-phospho-beta-D-ribosylamine + glycine + ATP = N(1)-(5-phospho-beta-D-ribosyl)glycinamide + ADP + phosphate + H(+). It participates in purine metabolism; IMP biosynthesis via de novo pathway; N(1)-(5-phospho-D-ribosyl)glycinamide from 5-phospho-alpha-D-ribose 1-diphosphate: step 2/2. This is Phosphoribosylamine--glycine ligase from Bacillus subtilis (strain 168).